A 180-amino-acid chain; its full sequence is Large ribosomal subunit protein uL6 (180 aa).

This sequence belongs to the universal ribosomal protein uL6 family. Part of the 50S ribosomal subunit.

In terms of biological role, this protein binds to the 23S rRNA, and is important in its secondary structure. It is located near the subunit interface in the base of the L7/L12 stalk, and near the tRNA binding site of the peptidyltransferase center. The protein is Large ribosomal subunit protein uL6 of Clostridioides difficile (strain 630) (Peptoclostridium difficile).